The primary structure comprises 453 residues: Aldehyde dehydrogenase, dimeric NADP-preferring (453 aa).

Serine 2 carries the N-acetylserine modification. Lysine 178 carries the post-translational modification N6-acetyllysine. An NAD(+)-binding site is contributed by glycine 188–glycine 193. Position 194 is an N6-acetyllysine (lysine 194). Residues glutamate 210 and cysteine 244 contribute to the active site.

The protein belongs to the aldehyde dehydrogenase family. In terms of assembly, homodimer.

Its subcellular location is the cytoplasm. The enzyme catalyses an aldehyde + NAD(+) + H2O = a carboxylate + NADH + 2 H(+). It catalyses the reaction octanal + NAD(+) + H2O = octanoate + NADH + 2 H(+). ALDHs play a major role in the detoxification of alcohol-derived acetaldehyde. They are involved in the metabolism of corticosteroids, biogenic amines, neurotransmitters, and lipid peroxidation. Oxidizes medium and long chain aldehydes into non-toxic fatty acids. Preferentially oxidizes aromatic aldehyde substrates. Comprises about 50 percent of corneal epithelial soluble proteins. May play a role in preventing corneal damage caused by ultraviolet light. This is Aldehyde dehydrogenase, dimeric NADP-preferring (Aldh3a1) from Rattus norvegicus (Rat).